The following is a 344-amino-acid chain: UDP-3-O-acylglucosamine N-acyltransferase (344 aa).

His244 functions as the Proton acceptor in the catalytic mechanism.

It belongs to the transferase hexapeptide repeat family. LpxD subfamily. As to quaternary structure, homotrimer.

It catalyses the reaction a UDP-3-O-[(3R)-3-hydroxyacyl]-alpha-D-glucosamine + a (3R)-hydroxyacyl-[ACP] = a UDP-2-N,3-O-bis[(3R)-3-hydroxyacyl]-alpha-D-glucosamine + holo-[ACP] + H(+). Its pathway is bacterial outer membrane biogenesis; LPS lipid A biosynthesis. Catalyzes the N-acylation of UDP-3-O-acylglucosamine using 3-hydroxyacyl-ACP as the acyl donor. Is involved in the biosynthesis of lipid A, a phosphorylated glycolipid that anchors the lipopolysaccharide to the outer membrane of the cell. The protein is UDP-3-O-acylglucosamine N-acyltransferase of Pseudoalteromonas atlantica (strain T6c / ATCC BAA-1087).